We begin with the raw amino-acid sequence, 240 residues long: MAPK-interacting and spindle-stabilizing protein-like (240 aa).

The disordered stretch occupies residues 1 to 240 (MSDEFSLADA…PMPGGPHSYH (240 aa)). Position 2 is an N-acetylserine (Ser2). Residues Ser2, Ser6, and Ser15 each carry the phosphoserine modification. Residues 16–26 (PAKTSAVSNTK) are compositionally biased toward polar residues. Residues 34–43 (WPGSNPWNNP) show a composition bias toward low complexity. Composition is skewed to pro residues over residues 44 to 66 (SAPPAVPSGLPPSATPSPVPFGP), 74 to 122 (SVPP…PELP), 159 to 185 (PNMPYPSPGPYPAPPPPQAPGAAPPVP), and 193 to 202 (AWGPPAPYPA).

This sequence belongs to the MISS family.

This is MAPK-interacting and spindle-stabilizing protein-like (MAPK1IP1L) from Bos taurus (Bovine).